Consider the following 735-residue polypeptide: Phosphoribosylformylglycinamidine synthase subunit PurL (735 aa).

The active site involves H44. Residues Y47 and K86 each coordinate ATP. E88 is a Mg(2+) binding site. Substrate-binding positions include 89 to 92 (SHNH) and R111. The active-site Proton acceptor is H90. D112 serves as a coordination point for Mg(2+). Q240 serves as a coordination point for substrate. Residue D268 coordinates Mg(2+). A substrate-binding site is contributed by 312–314 (ESQ). 2 residues coordinate ATP: D496 and G533. N534 is a binding site for Mg(2+). S536 serves as a coordination point for substrate.

It belongs to the FGAMS family. In terms of assembly, monomer. Part of the FGAM synthase complex composed of 1 PurL, 1 PurQ and 2 PurS subunits.

It localises to the cytoplasm. It carries out the reaction N(2)-formyl-N(1)-(5-phospho-beta-D-ribosyl)glycinamide + L-glutamine + ATP + H2O = 2-formamido-N(1)-(5-O-phospho-beta-D-ribosyl)acetamidine + L-glutamate + ADP + phosphate + H(+). It functions in the pathway purine metabolism; IMP biosynthesis via de novo pathway; 5-amino-1-(5-phospho-D-ribosyl)imidazole from N(2)-formyl-N(1)-(5-phospho-D-ribosyl)glycinamide: step 1/2. In terms of biological role, part of the phosphoribosylformylglycinamidine synthase complex involved in the purines biosynthetic pathway. Catalyzes the ATP-dependent conversion of formylglycinamide ribonucleotide (FGAR) and glutamine to yield formylglycinamidine ribonucleotide (FGAM) and glutamate. The FGAM synthase complex is composed of three subunits. PurQ produces an ammonia molecule by converting glutamine to glutamate. PurL transfers the ammonia molecule to FGAR to form FGAM in an ATP-dependent manner. PurS interacts with PurQ and PurL and is thought to assist in the transfer of the ammonia molecule from PurQ to PurL. The sequence is that of Phosphoribosylformylglycinamidine synthase subunit PurL from Nitratiruptor sp. (strain SB155-2).